Here is a 693-residue protein sequence, read N- to C-terminus: Polyribonucleotide nucleotidyltransferase (693 aa).

Mg(2+)-binding residues include D489 and D495. The KH domain maps to 556 to 615 (PQIHVMNINPAKIKDVVGRGGATVKGIVEKTGAQIDTSDSGEVKVFAKDKKSMDMAVAMI). Residues 625–693 (GQVYKGKIVK…GRVKLSLVAR (69 aa)) form the S1 motif domain.

Belongs to the polyribonucleotide nucleotidyltransferase family. As to quaternary structure, component of the RNA degradosome, which is a multiprotein complex involved in RNA processing and mRNA degradation. The cofactor is Mg(2+).

It is found in the cytoplasm. The catalysed reaction is RNA(n+1) + phosphate = RNA(n) + a ribonucleoside 5'-diphosphate. In terms of biological role, involved in mRNA degradation. Catalyzes the phosphorolysis of single-stranded polyribonucleotides processively in the 3'- to 5'-direction. This chain is Polyribonucleotide nucleotidyltransferase, found in Francisella tularensis subsp. tularensis (strain WY96-3418).